The primary structure comprises 404 residues: MILDVLRTFSTRTRNLPSSGFYSISTSIMRDIKVKSDSKEFLTSSDEEEESVSIRVSSSSSLSSVKSTPEIEKKYVHRVYDAIAPHFSSTRFAKWPKVAAFLESLPSGSVILDAGCGNGKYLGLNPSCFFIGCDISHPLIKICSDKGQEVLVADAVNLPYREEFGDAAISIAVLHHLSTENRRKKAIEELVRVVKPGGFVLITVWAAEQEDTSLLTKWTPLSAKYVEEWVGPGSPMNSPRVRNNPFFSLESIPETEVSTKEQKVENSQFIGLESIPESEESTREQKGESIIPETKASIVEQKDEKSVEESLEALKKSQQEYFVPWHLPYHRAEVSGASASALASGLAKKDDRKGAVVYNRYYHVFSEGELERLASGVGNAMIVDRFFDKSNWCIVLQKEALNQD.

S238 is subject to Phosphoserine.

As to quaternary structure, interacts with TRM112A and TRM112B.

It carries out the reaction 5-(carboxymethyl)uridine(34) in tRNA + S-adenosyl-L-methionine = 5-(2-methoxy-2-oxoethyl)uridine(34) in tRNA + S-adenosyl-L-homocysteine. In terms of biological role, catalyzes the methylation of 5-carboxymethyl uridine to 5-methylcarboxymethyl uridine at the wobble position of the anticodon loop in tRNA via its methyltransferase domain. Catalyzes the last step in the formation of 5-methylcarboxymethyl uridine at the wobble position of the anticodon loop in target tRNA. In Arabidopsis thaliana (Mouse-ear cress), this protein is tRNA (carboxymethyluridine(34)-5-O)-methyltransferase.